A 219-amino-acid polypeptide reads, in one-letter code: uncharacterized protein (219 aa).

A helical membrane pass occupies residues 13 to 32 (VFGLFLFSLIFFGLLSLATF).

It is found in the membrane. This is an uncharacterized protein from Aquifex aeolicus (strain VF5).